A 482-amino-acid chain; its full sequence is Glutamyl-tRNA(Gln) amidotransferase subunit A (482 aa).

Residues Lys75 and Ser150 each act as charge relay system in the active site. Residue Ser174 is the Acyl-ester intermediate of the active site.

This sequence belongs to the amidase family. GatA subfamily. In terms of assembly, heterotrimer of A, B and C subunits.

The catalysed reaction is L-glutamyl-tRNA(Gln) + L-glutamine + ATP + H2O = L-glutaminyl-tRNA(Gln) + L-glutamate + ADP + phosphate + H(+). Allows the formation of correctly charged Gln-tRNA(Gln) through the transamidation of misacylated Glu-tRNA(Gln) in organisms which lack glutaminyl-tRNA synthetase. The reaction takes place in the presence of glutamine and ATP through an activated gamma-phospho-Glu-tRNA(Gln). This chain is Glutamyl-tRNA(Gln) amidotransferase subunit A, found in Deinococcus radiodurans (strain ATCC 13939 / DSM 20539 / JCM 16871 / CCUG 27074 / LMG 4051 / NBRC 15346 / NCIMB 9279 / VKM B-1422 / R1).